A 186-amino-acid polypeptide reads, in one-letter code: Large ribosomal subunit protein uL22 (186 aa).

The segment at 159–186 (KATDEEPTKKKLSKKKLQRQKEKMMRSE) is disordered. Residues 177-186 (RQKEKMMRSE) are compositionally biased toward basic and acidic residues.

It belongs to the universal ribosomal protein uL22 family.

The sequence is that of Large ribosomal subunit protein uL22 (RpL17) from Phlebotomus papatasi (Sandfly).